A 2624-amino-acid polypeptide reads, in one-letter code: Transcription factor TFIIIB component B'' homolog (2624 aa).

A disordered region spans residues 1-142 (MFRRARLSVK…TKEKQPCSDR (142 aa)). Positions 1-299 (MFRRARLSVK…TYSSFRKNYY (299 aa)) are interaction with ZBTB43. Positions 63-77 (PQEKAPRSSTEKTGG) are enriched in basic and acidic residues. A compositionally biased stretch (low complexity) spans 99 to 119 (SSTSSLVKSSVSVPSESHPLS). Over residues 120–132 (TINQEAPQPTATS) the composition is skewed to polar residues. Residues 133-142 (TKEKQPCSDR) are compositionally biased toward basic and acidic residues. The stretch at 144-177 (RIYKAQKLREMLKEELRKEKKQWKNKYAINESQR) forms a coiled coil. The disordered stretch occupies residues 193 to 241 (LPDNNPMTSSLEQEKKTEKPSTPVQTREQEGKSTPNAEDNEMEEETDDG). The span at 212–229 (PSTPVQTREQEGKSTPNA) shows a compositional bias: polar residues. Residues 230–240 (EDNEMEEETDD) show a composition bias toward acidic residues. In terms of domain architecture, Myb-like spans 295-345 (RKNYYSKPWSNKETDMFFLAISMVGTDFSMIGQLFPHRARIEIKNKFKREE). Residues 355–470 (AFQEKRPFDF…QKKRRRKKQD (116 aa)) form a required for phosphorylation by CSNK2A1 region. Disordered stretches follow at residues 379–449 (EKRK…SRED), 544–567 (LSLS…TSDL), 606–663 (ENVK…MNTL), and 729–759 (EEIG…SRKD). Basic residues predominate over residues 397–407 (TKPRKNVKVKK). A compositionally biased stretch (low complexity) spans 552–565 (ATSVATESSESSTS). 2 stretches are compositionally biased toward basic and acidic residues: residues 637–663 (TESE…MNTL) and 736–759 (EKNE…SRKD). A 1; approximate repeat occupies 823 to 877 (GRREISSKEEVLEKILVSGEMAAALRETVRLDTSPKEMVPAEINTKEMQSDLKET). The segment at 823–1327 (GRREISSKEE…PRENELEETS (505 aa)) is 9 X 55 AA repeats of G-R-R-X-I-S-P-X-E-N-G-X-E-E-V-K-P-X-X-E-M-E-T-D-L-K-X-T-G-R-E-X-X-X-R-E-K-T-X-E-X-X-D-A-X-E-E-I-D-X-D-L-E-E-T. A run of 6 repeats spans residues 878–932 (GRRA…LEEA), 933–987 (GRRE…LEET), 988–1040 (GRRK…LEET), 1041–1094 (EREV…LEET), 1095–1148 (EREI…LEET), and 1149–1203 (GRRE…LEET). The residue at position 915 (threonine 915) is a Phosphothreonine. Composition is skewed to basic and acidic residues over residues 930-957 (EEAG…ETDL) and 979-1006 (EIDK…KPVD). Residues 930–1222 (EEAGRREISP…GPEEVKPVGK (293 aa)) form a disordered region. Positions 1030 to 1041 (DATEEIDLEETE) are enriched in acidic residues. Over residues 1052-1079 (EEVKPLGEMETDLKATGRDSFPRGKTPE) the composition is skewed to basic and acidic residues. The stretch at 1078–1103 (PEVIDAIEEIEIDLEETEREISPQEN) forms a coiled coil. Over residues 1082-1095 (DAIEEIEIDLEETE) the composition is skewed to acidic residues. The segment covering 1120–1133 (ATGREISPREKTPE) has biased composition (basic and acidic residues). Residues 1136–1145 (DATEEIDKDL) are compositionally biased toward acidic residues. Over residues 1161–1190 (EEVKPVDEMETDLKTTGREGSSREKTREVI) the composition is skewed to basic and acidic residues. The span at 1194-1204 (EVIETDLEETE) shows a compositional bias: acidic residues. One copy of the 8; approximate repeat lies at 1204–1257 (EREISPQENGPEEVKPVGKMETDLKEIREEISQREKVLAEFSAIREKEIDLKET). Residues 1223–1284 (METDLKEIRE…VEEMEADLKE (62 aa)) adopt a coiled-coil conformation. Residues 1258–1327 (GKRDIPIMEK…PRENELEETS (70 aa)) form a 9; approximate repeat. Residues 1306–1321 (AELKQTGKTDISPREN) are compositionally biased toward basic and acidic residues. 10 disordered regions span residues 1306-1348 (AELK…SAVP), 1365-1440 (TPVE…RFKR), 1519-1543 (TERN…VQKN), 1684-1722 (KAKP…LQKG), 1819-1863 (STSE…ASKA), 2130-2164 (GAEM…ENKD), 2181-2200 (SEVN…QEVH), 2207-2241 (VASS…GDSV), 2444-2501 (FQSR…SRPG), and 2519-2566 (SDEP…PSPS). Residues 1326–1344 (TSTSRQTDTHLMQSGSNDF) are compositionally biased toward polar residues. Basic and acidic residues predominate over residues 1366–1378 (PVEEKRNSEKEVS). 3 stretches are compositionally biased toward polar residues: residues 1379–1390 (SHFSHFKISSQT), 1411–1421 (SDINLSKSLPQ), and 1519–1529 (TERNLSPSNSC). A compositionally biased stretch (basic and acidic residues) spans 1695 to 1719 (KKEEPVLEKVTTDQSKEGKPEDHLL). Residues 1844-1853 (RGSKRVRGKT) are compositionally biased toward basic residues. A compositionally biased stretch (basic and acidic residues) spans 2131 to 2151 (AEMETQRETEKNASKATELEN). The segment covering 2470–2479 (VSDKEERTDA) has biased composition (basic and acidic residues). Residues 2488–2498 (SRTSSSKASLS) show a composition bias toward low complexity. Residues 2526–2544 (HSKKRLKPLIPGLRKKLKR) are compositionally biased toward basic residues.

Component of TFIIIB complex. The TFIIIB complex has two activities, alpha and beta. The TFIIIB-alpha and TFIIIB-beta activities are required for transcription of genes with TFIIIC-bound internal promoters and PSE transcription factor-bound external promoters, respectively. The TFIIIB-alpha activity complex is composed of TBP, BDP1, and a complex containing both BRF2 and at least four stably associated proteins; YY1 facilitates the formation of TFIIIB-alpha activity complex. The TFIIIB-beta activity complex is composed of TBP, BDP1, and BRF1. Interacts with BRF1; this interaction diminishes during mitosis resulting in the release of BDP1 from chromosomal templates. Component of TFIIIC complex. The TFIIIC complex has two activities, C1 and C2. The TFIIIC2 activity complex is only required for transcription of the 'classical' pol III genes whereas the TFIIIC1 activity complex is required for transcription of all pol III genes. The TFIIIC1 activity complex is composed at least of BDP1. Interacts with ZBTB43. Post-translationally, phosphorylated by CSNK2A1 during mitosis, resulting in its release from chromatin and suppression of polymerase III transcription. In terms of tissue distribution, isoform 2 is highly expressed in cerebellum.

The protein localises to the nucleus. In terms of biological role, general activator of RNA polymerase III transcription. Requires for transcription from all three types of polymerase III promoters. Requires for transcription of genes with internal promoter elements and with promoter elements upstream of the initiation site. The sequence is that of Transcription factor TFIIIB component B'' homolog (BDP1) from Homo sapiens (Human).